The sequence spans 308 residues: Dihydroorotate dehydrogenase A (fumarate) (308 aa).

FMN contacts are provided by residues Ser24 and 48–49; that span reads KS. Residues Lys48, 72–76, and Asn132 contribute to the substrate site; that span reads NANGL. Asn132 is an FMN binding site. Residue Cys135 is the Nucleophile of the active site. Lys171 and Ile197 together coordinate FMN. 198–199 is a substrate binding site; the sequence is NT. Residues Gly223 and 249–250 contribute to the FMN site; that span reads GG.

This sequence belongs to the dihydroorotate dehydrogenase family. Type 1 subfamily. As to quaternary structure, homodimer. The cofactor is FMN.

The protein resides in the cytoplasm. It catalyses the reaction (S)-dihydroorotate + fumarate = orotate + succinate. Its pathway is pyrimidine metabolism; UMP biosynthesis via de novo pathway. In terms of biological role, catalyzes the conversion of dihydroorotate to orotate with fumarate as the electron acceptor. The chain is Dihydroorotate dehydrogenase A (fumarate) (pyrD) from Limosilactobacillus reuteri (strain DSM 20016) (Lactobacillus reuteri).